The sequence spans 529 residues: Beta-galactoside alpha-2,6-sialyltransferase 2 (529 aa).

Over 1–11 (MKPHLKQWRQR) the chain is Cytoplasmic. Residues 12 to 32 (MLFGLFAGGLLFLLIFIYFTD) traverse the membrane as a helical; Signal-anchor for type II membrane protein segment. Topologically, residues 33–529 (SNPAEPVPSS…PAPSPVIPHS (497 aa)) are lumenal. The tract at residues 142–186 (SHSQGTLGFPSPGEPGPREGAFPAAQVQRRRVKKRHRRQRRSHVL) is disordered. Over residues 169–183 (QRRRVKKRHRRQRRS) the composition is skewed to basic residues. The N-linked (GlcNAc...) asparagine glycan is linked to N211. 3 cysteine pairs are disulfide-bonded: C253-C519, C296-C448, and C466-C477.

The protein belongs to the glycosyltransferase 29 family.

It is found in the golgi apparatus. The protein resides in the golgi stack membrane. It carries out the reaction a beta-D-galactoside + CMP-N-acetyl-beta-neuraminate = an N-acetyl-alpha-neuraminyl-(2-&gt;6)-beta-D-galactosyl derivative + CMP + H(+). Transfers sialic acid from the donor of substrate CMP-sialic acid to galactose containing acceptor substrates. Has alpha-2,6-sialyltransferase activity toward oligosaccharides that have the Gal-beta-1,4-GlcNAc sequence at the non-reducing end of their carbohydrate groups, but it has weak or no activities toward glycoproteins and glycolipids. In Pan troglodytes (Chimpanzee), this protein is Beta-galactoside alpha-2,6-sialyltransferase 2 (ST6GAL2).